A 223-amino-acid polypeptide reads, in one-letter code: Deoxyribose-phosphate aldolase (223 aa).

Residue aspartate 92 is the Proton donor/acceptor of the active site. Lysine 154 serves as the catalytic Schiff-base intermediate with acetaldehyde. Catalysis depends on lysine 182, which acts as the Proton donor/acceptor.

It belongs to the DeoC/FbaB aldolase family. DeoC type 1 subfamily.

The protein localises to the cytoplasm. It catalyses the reaction 2-deoxy-D-ribose 5-phosphate = D-glyceraldehyde 3-phosphate + acetaldehyde. The protein operates within carbohydrate degradation; 2-deoxy-D-ribose 1-phosphate degradation; D-glyceraldehyde 3-phosphate and acetaldehyde from 2-deoxy-alpha-D-ribose 1-phosphate: step 2/2. Its function is as follows. Catalyzes a reversible aldol reaction between acetaldehyde and D-glyceraldehyde 3-phosphate to generate 2-deoxy-D-ribose 5-phosphate. The protein is Deoxyribose-phosphate aldolase of Pasteurella multocida (strain Pm70).